The sequence spans 335 residues: Large ribosomal subunit protein uL3 (335 aa).

The disordered stretch occupies residues methionine 1 to alanine 20.

It belongs to the universal ribosomal protein uL3 family. Part of the 50S ribosomal subunit. Forms a cluster with proteins L14 and L24e.

Its function is as follows. One of the primary rRNA binding proteins, it binds directly near the 3'-end of the 23S rRNA, where it nucleates assembly of the 50S subunit. In Methanothrix harundinacea (strain 6Ac) (Methanosaeta harundinacea), this protein is Large ribosomal subunit protein uL3 (rpl3).